Reading from the N-terminus, the 473-residue chain is Aspartyl/glutamyl-tRNA(Asn/Gln) amidotransferase subunit B (473 aa).

It belongs to the GatB/GatE family. GatB subfamily. Heterotrimer of A, B and C subunits.

The enzyme catalyses L-glutamyl-tRNA(Gln) + L-glutamine + ATP + H2O = L-glutaminyl-tRNA(Gln) + L-glutamate + ADP + phosphate + H(+). The catalysed reaction is L-aspartyl-tRNA(Asn) + L-glutamine + ATP + H2O = L-asparaginyl-tRNA(Asn) + L-glutamate + ADP + phosphate + 2 H(+). Allows the formation of correctly charged Asn-tRNA(Asn) or Gln-tRNA(Gln) through the transamidation of misacylated Asp-tRNA(Asn) or Glu-tRNA(Gln) in organisms which lack either or both of asparaginyl-tRNA or glutaminyl-tRNA synthetases. The reaction takes place in the presence of glutamine and ATP through an activated phospho-Asp-tRNA(Asn) or phospho-Glu-tRNA(Gln). The protein is Aspartyl/glutamyl-tRNA(Asn/Gln) amidotransferase subunit B of Methanococcoides burtonii (strain DSM 6242 / NBRC 107633 / OCM 468 / ACE-M).